We begin with the raw amino-acid sequence, 36 residues long: Photosystem I reaction center subunit VIII (36 aa).

A helical transmembrane segment spans residues 9–29 (ISVPLVGLVFPAITMVLSFIY).

The protein belongs to the PsaI family.

The protein localises to the plastid. It localises to the chloroplast thylakoid membrane. May help in the organization of the PsaL subunit. The chain is Photosystem I reaction center subunit VIII from Huperzia lucidula (Shining clubmoss).